The following is a 690-amino-acid chain: Elongation factor G (690 aa).

Residues 8–283 (ERYRNFGIMA…AVVDFMPSPL (276 aa)) form the tr-type G domain. GTP is bound by residues 17 to 24 (AHIDAGKT), 81 to 85 (DTPGH), and 135 to 138 (NKLD).

It belongs to the TRAFAC class translation factor GTPase superfamily. Classic translation factor GTPase family. EF-G/EF-2 subfamily.

It localises to the cytoplasm. In terms of biological role, catalyzes the GTP-dependent ribosomal translocation step during translation elongation. During this step, the ribosome changes from the pre-translocational (PRE) to the post-translocational (POST) state as the newly formed A-site-bound peptidyl-tRNA and P-site-bound deacylated tRNA move to the P and E sites, respectively. Catalyzes the coordinated movement of the two tRNA molecules, the mRNA and conformational changes in the ribosome. This is Elongation factor G from Novosphingobium aromaticivorans (strain ATCC 700278 / DSM 12444 / CCUG 56034 / CIP 105152 / NBRC 16084 / F199).